Reading from the N-terminus, the 161-residue chain is Non-specific lipid transfer protein GPI-anchored 24 (161 aa).

The signal sequence occupies residues 1–23 (MAQTTTLILLLATLLVAATTVSG). Cystine bridges form between Cys42/Cys79, Cys49/Cys63, Cys64/Cys104, and Cys77/Cys113. Asn92 carries an N-linked (GlcNAc...) asparagine glycan. The GPI-anchor amidated aspartate moiety is linked to residue Asp138. Residues 139-161 (AASKLAGTGLVGIVVITIAAMFY) constitute a propeptide, removed in mature form.

It belongs to the plant LTP family.

It localises to the cell membrane. Probable lipid transfer protein. The polypeptide is Non-specific lipid transfer protein GPI-anchored 24 (Arabidopsis thaliana (Mouse-ear cress)).